Reading from the N-terminus, the 217-residue chain is Endo-1,4-beta-xylanase (217 aa).

Positions 1–17 are cleaved as a signal peptide; the sequence is MQFLIPVVILCVSLVDS. A GH11 domain is found at 20 to 217; sequence VLYNNEIGFN…SSGFADITVS (198 aa). 2 N-linked (GlcNAc...) asparagine glycosylation sites follow: Asn56 and Asn80. Glu107 serves as the catalytic Nucleophile. The active-site Proton donor is Glu204.

Belongs to the glycosyl hydrolase 11 (cellulase G) family. Expressed in larval carcasses and gut, and adult gut.

It localises to the secreted. It carries out the reaction Endohydrolysis of (1-&gt;4)-beta-D-xylosidic linkages in xylans.. The protein operates within glycan degradation; xylan degradation. This is Endo-1,4-beta-xylanase from Phaedon cochleariae (Mustard beetle).